Here is a 716-residue protein sequence, read N- to C-terminus: 1,4-alpha-glucan branching enzyme GlgB (716 aa).

Residue Asp-398 is the Nucleophile of the active site. The active-site Proton donor is Glu-451.

It belongs to the glycosyl hydrolase 13 family. GlgB subfamily. In terms of assembly, monomer.

It catalyses the reaction Transfers a segment of a (1-&gt;4)-alpha-D-glucan chain to a primary hydroxy group in a similar glucan chain.. It functions in the pathway glycan biosynthesis; glycogen biosynthesis. Functionally, catalyzes the formation of the alpha-1,6-glucosidic linkages in glycogen by scission of a 1,4-alpha-linked oligosaccharide from growing alpha-1,4-glucan chains and the subsequent attachment of the oligosaccharide to the alpha-1,6 position. The sequence is that of 1,4-alpha-glucan branching enzyme GlgB from Nitrobacter hamburgensis (strain DSM 10229 / NCIMB 13809 / X14).